The following is a 229-amino-acid chain: Allatostatin-A (229 aa).

An N-terminal signal peptide occupies residues 1–18 (MLSTSLPVCFLVIGAALC). The propeptide occupies 19 to 48 (APERMQNDPDPHDSTAQGSDNHSDHIAPLA). The segment at 23–46 (MQNDPDPHDSTAQGSDNHSDHIAP) is disordered. Leucine 58 carries the leucine amide modification. The propeptide occupies 62–80 (AYSYVSEYKRLPVYNFGLG). Leucine 90 carries the post-translational modification Leucine amide. Positions 94–130 (SVDEDQTNDDQQQIMNNDLDQAALAEFFDQYDDAGYE) are excised as a propeptide. Leucine amide is present on leucine 140. Residues 144–152 (FADDDTSEE) constitute a propeptide that is removed on maturation. Leucine amide is present on residues leucine 162, leucine 173, leucine 184, leucine 196, and leucine 210. A propeptide spanning residues 214-229 (SADDASTEDSDNYFDV) is cleaved from the precursor.

This sequence belongs to the allatostatin family. Allatostatin-A-1: Expressed in antennal lobe (AL), corpora cardiaca (CC), corpora allata (CA) and gnathal ganglion (GNG) (at protein level). Expression in AL and GNG detected in most animals, in CC and CA in some animals (at protein level). Allatostatin-A-3: Expressed in antennal lobe (AL), corpora cardiaca (CC), corpora allata (CA) and gnathal ganglion (GNG) (at protein level). Expression in AL detected in all animals, in GNG, CC and CA in most animals (at protein level). Allatostatin-A-4: Expressed in antennal lobe (AL), corpora cardiaca (CC), corpora allata (CA) and gnathal ganglion (GNG) in all animals (at protein level). Allatostatin-A-5: Expressed in antennal lobe (AL), corpora cardiaca (CC), corpora allata (CA) and gnathal ganglion (GNG) in all animals (at protein level). Allatostatin-A-6: Expressed in antennal lobe (AL) and gnathal ganglion (GNG) (at protein level). Expression in AL detected in some animals, in GNG in few animals (at protein level). Not expressed in corpora cardiaca (CC) and corpora allata (CA) (at protein level). Allatostatin-A-7: Expressed in antennal lobe (AL), corpora cardiaca (CC), corpora allata (CA) and gnathal ganglion (GNG) (at protein level). Expression in AL detected in all animals, in GNG, CC and CA in most animals (at protein level). Allatostatin-A-8: Expressed in antennal lobe (AL), corpora cardiaca (CC), corpora allata (CA) and gnathal ganglion (GNG) (at protein level). Expression in AL detected in all animals, in GNG, CC and CA in most animals (at protein level). Allatostatin-A-9: Expressed in antennal lobe (AL), corpora cardiaca (CC), corpora allata (CA) and gnathal ganglion (GNG) (at protein level). Expression in AL detected in all animals, in GNG in most animals and in CC and CA in some animals (at protein level).

It is found in the secreted. In terms of biological role, neuropeptide inhibitors of juvenile hormone synthesis and gut muscle contraction. The chain is Allatostatin-A from Agrotis ipsilon (Black cutworm moth).